The chain runs to 339 residues: Ketol-acid reductoisomerase (NADP(+)) (339 aa).

The KARI N-terminal Rossmann domain maps to 1-182; the sequence is MRVYYDRDAD…GGGRAGIIET (182 aa). NADP(+) contacts are provided by residues 24-27, R48, S51, T53, and 83-86; these read YGSQ and DELQ. Residue H108 is part of the active site. Residue G134 participates in NADP(+) binding. In terms of domain architecture, KARI C-terminal knotted spans 183–328; it reads TFREECETDL…AKLRAMMPWI (146 aa). Residues D191, E195, E227, and E231 each contribute to the Mg(2+) site. Residue S252 participates in substrate binding.

It belongs to the ketol-acid reductoisomerase family. Requires Mg(2+) as cofactor.

The catalysed reaction is (2R)-2,3-dihydroxy-3-methylbutanoate + NADP(+) = (2S)-2-acetolactate + NADPH + H(+). It carries out the reaction (2R,3R)-2,3-dihydroxy-3-methylpentanoate + NADP(+) = (S)-2-ethyl-2-hydroxy-3-oxobutanoate + NADPH + H(+). The protein operates within amino-acid biosynthesis; L-isoleucine biosynthesis; L-isoleucine from 2-oxobutanoate: step 2/4. Its pathway is amino-acid biosynthesis; L-valine biosynthesis; L-valine from pyruvate: step 2/4. Its function is as follows. Involved in the biosynthesis of branched-chain amino acids (BCAA). Catalyzes an alkyl-migration followed by a ketol-acid reduction of (S)-2-acetolactate (S2AL) to yield (R)-2,3-dihydroxy-isovalerate. In the isomerase reaction, S2AL is rearranged via a Mg-dependent methyl migration to produce 3-hydroxy-3-methyl-2-ketobutyrate (HMKB). In the reductase reaction, this 2-ketoacid undergoes a metal-dependent reduction by NADPH to yield (R)-2,3-dihydroxy-isovalerate. This is Ketol-acid reductoisomerase (NADP(+)) from Methylocella silvestris (strain DSM 15510 / CIP 108128 / LMG 27833 / NCIMB 13906 / BL2).